We begin with the raw amino-acid sequence, 337 residues long: uncharacterized protein (337 aa).

The span at 42–66 (SHSVSPSPSPSDFSSSSSSSSSSPS) shows a compositional bias: low complexity. Residues 42–68 (SHSVSPSPSPSDFSSSSSSSSSSPSTF) form a disordered region. Positions 129–304 (FLVIDLEGKV…DDTKNITRVV (176 aa)) constitute an Exonuclease domain. 3 residues coordinate Mg(2+): aspartate 133, glutamate 135, and aspartate 234. Catalysis depends on glutamate 135, which acts as the Proton acceptor. Glutamate 135 is an AMP binding site. Catalysis depends on histidine 291, which acts as the Proton acceptor. Histidine 291 provides a ligand contact to AMP. Residue aspartate 296 participates in Mg(2+) binding.

This is an uncharacterized protein from Arabidopsis thaliana (Mouse-ear cress).